We begin with the raw amino-acid sequence, 244 residues long: S-adenosyl-L-methionine-dependent Diels-Alderase iliD (244 aa).

It belongs to the class I-like SAM-binding methyltransferase superfamily. Erg6/SMT family. The cofactor is S-adenosyl-L-methionine.

The catalysed reaction is 3-[(2E,4E,8S,10E,12Z)-4,8-dimethyltetradeca-2,4,10,12-tetraenoyl]-4-hydroxy-5-(4-hydroxyphenyl)-1,2-dihydropyridin-2-one = ilicicolin H. It functions in the pathway mycotoxin biosynthesis. S-adenosyl-l-methionine-dependent Diels-Alderase; part of the gene cluster that mediates the biosynthesis of ilicicolin H, a 4-hydroxy-2-pyridonealkaloid that has potent and broad antifungal activities by inhibiting the mitochondrial respiration chain. IliD catalyzes the Diels-Alder reaction that converts the acyclic 2-pyridone intermediate to 8-epi-ilicicolin H. The biosynthesis of ilicicolin H starts with formation of the tetramic acid by the hybrid PKS-NRPS synthetase iliA with the partnering trans-enoyl reductase iliB since iliA lacks a designated enoylreductase (ER) domain. The cytochrome P450 monooxygenase iliC then catalyzes the ring expansion of the tetramate to the acyclic 2-pyridone. The pericyclase iliD further converts the acyclic 2-pyridone into 8-epi-ilicicolin H. 8-epi-ilicicolin H might then spontaneously convert to ilicicolin H since ilicicolin H is produced in the absence of the epimerase iliE, in contrast to what was observed for the Talaromyces variabilis ilicolin H biosynthetic pathway. The polypeptide is S-adenosyl-L-methionine-dependent Diels-Alderase iliD (Neonectria sp. (strain DH2)).